Here is a 139-residue protein sequence, read N- to C-terminus: Nucleoside diphosphate kinase (139 aa).

Residues K10, F58, R86, T92, R104, and N114 each coordinate ATP. H117 serves as the catalytic Pros-phosphohistidine intermediate.

This sequence belongs to the NDK family. As to quaternary structure, homotetramer. The cofactor is Mg(2+).

The protein localises to the cytoplasm. It carries out the reaction a 2'-deoxyribonucleoside 5'-diphosphate + ATP = a 2'-deoxyribonucleoside 5'-triphosphate + ADP. The enzyme catalyses a ribonucleoside 5'-diphosphate + ATP = a ribonucleoside 5'-triphosphate + ADP. Its function is as follows. Major role in the synthesis of nucleoside triphosphates other than ATP. The ATP gamma phosphate is transferred to the NDP beta phosphate via a ping-pong mechanism, using a phosphorylated active-site intermediate. In Rhodococcus jostii (strain RHA1), this protein is Nucleoside diphosphate kinase.